A 113-amino-acid chain; its full sequence is Small ribosomal subunit protein bS6 (113 aa).

This sequence belongs to the bacterial ribosomal protein bS6 family.

In terms of biological role, binds together with bS18 to 16S ribosomal RNA. The polypeptide is Small ribosomal subunit protein bS6 (Wigglesworthia glossinidia brevipalpis).